The following is a 458-amino-acid chain: ATP synthase subunit beta (458 aa).

Residue 148–155 (GGAGVGKT) participates in ATP binding.

It belongs to the ATPase alpha/beta chains family. In terms of assembly, F-type ATPases have 2 components, CF(1) - the catalytic core - and CF(0) - the membrane proton channel. CF(1) has five subunits: alpha(3), beta(3), gamma(1), delta(1), epsilon(1). CF(0) has three main subunits: a(1), b(2) and c(9-12). The alpha and beta chains form an alternating ring which encloses part of the gamma chain. CF(1) is attached to CF(0) by a central stalk formed by the gamma and epsilon chains, while a peripheral stalk is formed by the delta and b chains.

The protein resides in the cell inner membrane. The enzyme catalyses ATP + H2O + 4 H(+)(in) = ADP + phosphate + 5 H(+)(out). Functionally, produces ATP from ADP in the presence of a proton gradient across the membrane. The catalytic sites are hosted primarily by the beta subunits. In Shewanella halifaxensis (strain HAW-EB4), this protein is ATP synthase subunit beta.